Reading from the N-terminus, the 773-residue chain is Polymeric immunoglobulin receptor (773 aa).

The first 18 residues, 1–18 (MALFLLTCLLAVFSAATA), serve as a signal peptide directing secretion. Residues 19 to 647 (QSSLLGPSSI…SASGQSGSAK (629 aa)) are Extracellular-facing. The 107-residue stretch at 25–131 (PSSIFGPGEV…RGLDFGVNVL (107 aa)) folds into the Ig-like V-type 1; required for binding to polymeric IgA and IgM domain. Cystine bridges form between Cys46–Cys115, Cys155–Cys225, Cys260–Cys324, Cys369–Cys438, and Cys478–Cys538. N-linked (GlcNAc...) asparagine; in variant N-88 glycosylation is present at Lys88. Asn108 is a glycosylation site (N-linked (GlcNAc...) asparagine). 4 consecutive Ig-like V-type domains span residues 138-232 (PDDV…SDPT), 233-340 (AEEQ…TQLR), 352-455 (RSPP…LQIV), and 461-557 (PTID…VELT). Asn418 carries N-linked (GlcNAc...) asparagine glycosylation. The interval 619 to 641 (AVQSAEDPASGSRASVDASSASG) is disordered. Low complexity predominate over residues 632–641 (ASVDASSASG). A helical membrane pass occupies residues 648 to 670 (VLISTLVPLGLVLAAGAMAVAIA). Over 671–773 (RARHRRNVDR…AEHQDGPKEA (103 aa)) the chain is Cytoplasmic. 4 positions are modified to phosphoserine: Ser682, Ser691, Ser698, and Ser744. Residues 725 to 746 (ATATESTVEIEEPKKAKRSSKE) are disordered. A compositionally biased stretch (basic and acidic residues) spans 735-746 (EEPKKAKRSSKE).

In terms of assembly, interacts (mainly via CDR1-like domain) with dimeric IgA. Interacts (mainly via CDR2-like domain) with pentameric IgM. As to quaternary structure, either free or part of the secretory IgA (sIgA) complex that consists of two, four or five IgA monomers, and two additional non-Ig polypeptides, namely the JCHAIN and the secretory component (the proteolytic product of PIGR). Free secretory component interacts with bacterial antigens toxA of C.difficile and eae of E.coli. N-glycosylated. N-glycosylation is required for anchoring IgA molecules to mucus, but is not necessary for Ig binding.

Its subcellular location is the cell membrane. It localises to the secreted. Its function is as follows. Mediates selective transcytosis of polymeric IgA and IgM across mucosal epithelial cells. Binds polymeric IgA and IgM at the basolateral surface of epithelial cells. The complex is then transported across the cell to be secreted at the apical surface. During this process, a cleavage occurs that separates the extracellular (known as the secretory component) from the transmembrane segment. Through its N-linked glycans ensures anchoring of secretory IgA (sIgA) molecules to mucus lining the epithelial surface to neutralize extracellular pathogens. On its own (free form) may act as a non-specific microbial scavenger to prevent pathogen interaction with epithelial cells. In Oryctolagus cuniculus (Rabbit), this protein is Polymeric immunoglobulin receptor (PIGR).